The primary structure comprises 509 residues: Carboxysome shell carbonic anhydrase (509 aa).

Cysteine 170 lines the Zn(2+) pocket. Aspartate 172 acts as the Proton acceptor in catalysis. Zn(2+)-binding residues include histidine 238 and cysteine 249.

Belongs to the beta-class carbonic anhydrase family. CsoSCA subfamily. In terms of assembly, homodimer. It depends on Zn(2+) as a cofactor.

It is found in the carboxysome. The catalysed reaction is hydrogencarbonate + H(+) = CO2 + H2O. In terms of biological role, reversible hydration of carbon dioxide. Essential for photosynthetic carbon dioxide fixation, supplies CO(2) to RuBisCO (ribulose bisphosphate carboxylase, cbbL-cbbS) in the carboxysome. There are estimated to be 29 CsoSCA oligomers per carboxysome. The polypeptide is Carboxysome shell carbonic anhydrase (Prochlorococcus marinus subsp. pastoris (strain CCMP1986 / NIES-2087 / MED4)).